Consider the following 1296-residue polypeptide: Phosphoribosylformylglycinamidine synthase (1296 aa).

Residues 304-323 are disordered; that stretch reads WPGAATGSGGEIRDEGATGR. ATP-binding positions include 306–317 and A677; that span reads GAATGSGGEIRD. Mg(2+) contacts are provided by D678, E717, N721, and D885. S887 is a binding site for ATP. A compositionally biased stretch (basic and acidic residues) spans 1000-1013; sequence PDCADQEHQAKQDE. Residues 1000–1019 form a disordered region; it reads PDCADQEHQAKQDESDPGLN. A Glutamine amidotransferase type-1 domain is found at 1043–1296; that stretch reads VAVLREQGVN…MFRNARKQLG (254 aa). The Nucleophile role is filled by C1136. Residues H1261 and E1263 contribute to the active site.

The protein in the N-terminal section; belongs to the FGAMS family. Monomer.

The protein localises to the cytoplasm. It carries out the reaction N(2)-formyl-N(1)-(5-phospho-beta-D-ribosyl)glycinamide + L-glutamine + ATP + H2O = 2-formamido-N(1)-(5-O-phospho-beta-D-ribosyl)acetamidine + L-glutamate + ADP + phosphate + H(+). It participates in purine metabolism; IMP biosynthesis via de novo pathway; 5-amino-1-(5-phospho-D-ribosyl)imidazole from N(2)-formyl-N(1)-(5-phospho-D-ribosyl)glycinamide: step 1/2. Phosphoribosylformylglycinamidine synthase involved in the purines biosynthetic pathway. Catalyzes the ATP-dependent conversion of formylglycinamide ribonucleotide (FGAR) and glutamine to yield formylglycinamidine ribonucleotide (FGAM) and glutamate. The protein is Phosphoribosylformylglycinamidine synthase of Yersinia pseudotuberculosis serotype I (strain IP32953).